Reading from the N-terminus, the 368-residue chain is Ankyrin repeat domain-containing protein 40 (368 aa).

Methionine 1 carries the post-translational modification N-acetylmethionine. ANK repeat units lie at residues 9–38 and 43–72; these read EQQE…DVNS and NGWT…DKEI. Disordered stretches follow at residues 93 to 115, 139 to 176, and 196 to 238; these read MGVE…KKES, DSAQ…GTFP, and ILRT…NGTY. The segment covering 95–107 has biased composition (acidic residues); the sequence is VEEEDDDDDDDDN. Residues 149 to 169 show a composition bias toward pro residues; the sequence is STPPASPPADGSPPLLPPGEP. The span at 212 to 224 shows a compositional bias: polar residues; the sequence is PVSQSRSLFSSVP.

The sequence is that of Ankyrin repeat domain-containing protein 40 (ANKRD40) from Homo sapiens (Human).